The primary structure comprises 416 residues: Thioredoxin domain-containing protein 5 homolog (416 aa).

Residues 1-25 form the signal peptide; that stretch reads MLTRSILSVAVCGLLLSPLLPITRA. Thioredoxin domains lie at 26–145, 150–272, and 293–412; these read SQEE…KELS, ADLG…KMVG, and AGEE…KFLG. Disulfide bonds link Cys-65–Cys-68, Cys-194–Cys-197, and Cys-331–Cys-334. Residues 413–416 carry the Prevents secretion from ER motif; that stretch reads HDEL.

Belongs to the protein disulfide isomerase family.

Its subcellular location is the endoplasmic reticulum. It is found in the cell surface. Possesses thioredoxin activity. Acts as a ligand for Drpr and is required for the phagocytosis of apoptotic cells. Binds to the extracellular region of Drpr and augments Drpr tyrosine phosphorylation. This Drosophila melanogaster (Fruit fly) protein is Thioredoxin domain-containing protein 5 homolog.